A 285-amino-acid polypeptide reads, in one-letter code: Large ribosomal subunit protein uL2 (285 aa).

Residues glycine 215 to tyrosine 285 form a disordered region. Basic residues predominate over residues tryptophan 256–serine 272.

It belongs to the universal ribosomal protein uL2 family. As to quaternary structure, part of the 50S ribosomal subunit. Forms a bridge to the 30S subunit in the 70S ribosome.

Its function is as follows. One of the primary rRNA binding proteins. Required for association of the 30S and 50S subunits to form the 70S ribosome, for tRNA binding and peptide bond formation. It has been suggested to have peptidyltransferase activity; this is somewhat controversial. Makes several contacts with the 16S rRNA in the 70S ribosome. The chain is Large ribosomal subunit protein uL2 from Mycoplasma genitalium (strain ATCC 33530 / DSM 19775 / NCTC 10195 / G37) (Mycoplasmoides genitalium).